We begin with the raw amino-acid sequence, 721 residues long: Xylosyl- and glucuronyltransferase LARGE2 (721 aa).

At 1 to 8 (MLPRGRPR) the chain is on the cytoplasmic side. The helical; Signal-anchor for type II membrane protein transmembrane segment at 9–29 (ALGAAALLLLLLLLGFLLFGG) threads the bilayer. The Lumenal segment spans residues 30-721 (DLGCERREPG…LQQPQSPARG (692 aa)). The interval 59–89 (DGRLRRAAALDGDPGAGPGDHNRSDCGPQPP) is disordered. 2 N-linked (GlcNAc...) asparagine glycosylation sites follow: Asn-80 and Asn-107. The segment at 97–372 (LHVAIVCAGH…FLEYDGNLLR (276 aa)) is xylosyltransferase activity. Mn(2+)-binding residues include Asp-201 and Asp-203. The N-linked (GlcNAc...) asparagine glycan is linked to Asn-231. The tract at residues 373–715 (RELFVCPSQP…LKYLPALQQP (343 aa)) is glucuronyltransferase activity. Asp-521 and Asp-523 together coordinate Mn(2+).

In the C-terminal section; belongs to the glycosyltransferase 49 family. The protein in the N-terminal section; belongs to the glycosyltransferase 8 family. Interacts with B4GAT1. Mn(2+) is required as a cofactor. Widely expressed. Expressed at high level in placenta, pancreas and kidney compared to LARGE. Not expressed in brain.

It localises to the golgi apparatus membrane. It catalyses the reaction 3-O-[beta-D-GlcA-(1-&gt;3)-beta-D-Xyl-(1-&gt;4)-Rib-ol-P-Rib-ol-P-3-beta-D-GalNAc-(1-&gt;3)-beta-D-GlcNAc-(1-&gt;4)-(O-6-P-alpha-D-Man)]-Thr-[protein] + UDP-alpha-D-xylose = 3-O-[alpha-D-Xyl-(1-&gt;3)-beta-D-GlcA-(1-&gt;4)-beta-D-Xyl-(1-&gt;4)-Rib-ol-P-Rib-ol-P-3-beta-D-GalNAc-(1-&gt;3)-beta-D-GlcNAc-(1-&gt;4)-(O-6-P-alpha-D-Man)]-Thr-[protein] + UDP + H(+). The enzyme catalyses 3-O-{(1-&gt;[3)-alpha-D-Xyl-(1-&gt;3)-beta-D-GlcA-(1-&gt;](n)-4)-beta-D-Xyl-(1-&gt;4)-Rib-ol-P-Rib-ol-P-3-beta-D-GalNAc-(1-&gt;3)-beta-D-GlcNAc-(1-&gt;4)-O-6-P-alpha-D-Man}-L-Thr-[protein] + UDP-alpha-D-glucuronate = 3-O-{beta-D-GlcA-(1-&gt;[3)-alpha-D-Xyl-(1-&gt;3)-beta-D-GlcA-(1-&gt;](n)-4)-beta-D-Xyl-(1-&gt;4)-Rib-ol-P-Rib-ol-P-3-beta-D-GalNAc-(1-&gt;3)-beta-D-GlcNAc-(1-&gt;4)-O-6-P-alpha-D-Man}-L-Thr-[protein] + UDP + H(+). It carries out the reaction 3-O-{beta-D-GlcA-(1-&gt;[3)-alpha-D-Xyl-(1-&gt;3)-beta-D-GlcA-(1-&gt;](n)-4)-beta-D-Xyl-(1-&gt;4)-Rib-ol-P-Rib-ol-P-3-beta-D-GalNAc-(1-&gt;3)-beta-D-GlcNAc-(1-&gt;4)-O-6-P-alpha-D-Man}-L-Thr-[protein] + UDP-alpha-D-xylose = 3-O-{(1-&gt;[3)-alpha-D-Xyl-(1-&gt;3)-beta-D-GlcA-(1-&gt;](n+1)-4)-beta-D-Xyl-(1-&gt;4)-Rib-ol-P-Rib-ol-P-3-beta-D-GalNAc-(1-&gt;3)-beta-D-GlcNAc-(1-&gt;4)-O-6-P-alpha-D-Man}-L-Thr-[protein] + UDP + H(+). It participates in protein modification; protein glycosylation. Bifunctional glycosyltransferase with both alpha-1,3-xylosyltransferase and beta-1,3-glucuronyltransferase activities involved in the maturation of alpha-dystroglycan (DAG1) by glycosylation leading to DAG1 binding to laminin G-like domain-containing extracellular proteins with high affinity and in a phosphorylated-O-mannosyl trisaccharide dependent manner. Elongates the glucuronyl-beta-1,4-xylose-beta disaccharide primer structure by adding repeating units [-3-Xylose-alpha-1,3-GlcA-beta-1-] to produce a heteropolysaccharide. Supports the maturation of DAG1 more effectively than LARGE1. In addition, can modify both heparan sulfate (HS)- and chondroitin/dermatan sulfate (CS/DS)-proteoglycans (PGs), namely GPC4, with a glycosaminoglycan (GAG)-like polysaccharide composed of xylose and glucuronic acid to confer laminin binding. The protein is Xylosyl- and glucuronyltransferase LARGE2 of Homo sapiens (Human).